The primary structure comprises 546 residues: MWLNFIFRRTAPVPFLESILIKEAKKESLRFQRSLFDSFSYGFVVGGERESLLRFSENLSKNLPLSLFFFFIKVEPLEGEPPSLETLAENPAQGVMDFTPLEMEAFLPKEGERSLRSLPWRVSFQLKGEKRENLEGEALYEAFEALAKKVLEGESILITTRRGLYQLSLKGTKKTQKGENKPLFMPLDVASAELLFRVCEPELNALATWEKPRIELAPKGVFLDRFEGALYPESGVEVLLPYDLPLMILSHFLRAHEVEMVVLERALEGEGEGLFYENSEPLESLKVCVSDDSTVLVTDRERGGLIPDYSTLISKLLEENHLHEGALALHLSHHAPSYFWLIQGEARRSVMRFELPLNPALLWQEIAQSGETGESLTQNFSREFPGLAKRIQNSQAQGVSENLNDWVGMAGFFLGLQEEWNPKGAQEALWSKAKAFLGAKGPRVDFPLKKEESGRVGLDATRVIRSCMSFKLAGIDDETLAFGVIDSLAEFWGNLLRDMSENFAQERVILSGSLLSNRAFLNKILQYTPKHLQLHFPLQTPLDFVS.

This is Protein HydE (hydE) from Wolinella succinogenes (strain ATCC 29543 / DSM 1740 / CCUG 13145 / JCM 31913 / LMG 7466 / NCTC 11488 / FDC 602W) (Vibrio succinogenes).